A 424-amino-acid polypeptide reads, in one-letter code: D-inositol 3-phosphate glycosyltransferase (424 aa).

Histidine 9 provides a ligand contact to 1D-myo-inositol 3-phosphate. UDP-N-acetyl-alpha-D-glucosamine-binding positions include glutamine 15–proline 16 and glycine 23. Residues aspartate 20–asparagine 25, lysine 78, tyrosine 110, threonine 134, and arginine 154 each bind 1D-myo-inositol 3-phosphate. UDP-N-acetyl-alpha-D-glucosamine-binding residues include arginine 231, lysine 236, and arginine 294. Residues tyrosine 303, arginine 304, and alanine 306 each coordinate Mg(2+). UDP-N-acetyl-alpha-D-glucosamine is bound by residues glutamate 316 and glutamate 324. Position 330 (threonine 330) interacts with Mg(2+).

It belongs to the glycosyltransferase group 1 family. MshA subfamily. In terms of assembly, homodimer.

It catalyses the reaction 1D-myo-inositol 3-phosphate + UDP-N-acetyl-alpha-D-glucosamine = 1D-myo-inositol 2-acetamido-2-deoxy-alpha-D-glucopyranoside 3-phosphate + UDP + H(+). Functionally, catalyzes the transfer of a N-acetyl-glucosamine moiety to 1D-myo-inositol 3-phosphate to produce 1D-myo-inositol 2-acetamido-2-deoxy-glucopyranoside 3-phosphate in the mycothiol biosynthesis pathway. This chain is D-inositol 3-phosphate glycosyltransferase, found in Corynebacterium efficiens (strain DSM 44549 / YS-314 / AJ 12310 / JCM 11189 / NBRC 100395).